The sequence spans 177 residues: uncharacterized protein (177 aa).

To M.jannaschii MJ0628.

This is an uncharacterized protein from Methanocaldococcus jannaschii (strain ATCC 43067 / DSM 2661 / JAL-1 / JCM 10045 / NBRC 100440) (Methanococcus jannaschii).